Here is a 355-residue protein sequence, read N- to C-terminus: Protein FIP1 (355 aa).

4 helical membrane-spanning segments follow: residues 42 to 62 (YLYM…PWMF), 72 to 92 (LLCC…QYFV), 113 to 133 (VVRL…LVIV), and 149 to 169 (IIML…IGYV). A coiled-coil region spans residues 220 to 337 (LHFLSEEILC…RMSNSELQKE (118 aa)). Positions 331–340 (NSELQKEVAS) are enriched in basic and acidic residues. Positions 331–355 (NSELQKEVASTRRKQMLETTTSEQP) are disordered.

The protein belongs to the TMEM192 family. As to quaternary structure, interacts with FRI.

It localises to the membrane. This Arabidopsis thaliana (Mouse-ear cress) protein is Protein FIP1.